Here is a 337-residue protein sequence, read N- to C-terminus: GTPase Obg (337 aa).

The Obg domain maps to 1–158 (MFIDEVRILV…KRLRLELKLL (158 aa)). 2 stretches are compositionally biased toward basic and acidic residues: residues 61–74 (NPEH…HGEG) and 137–146 (PTEHEPGRPG). 2 disordered regions span residues 61–83 (NPEH…AEGR) and 119–146 (GGRG…GRPG). The OBG-type G domain occupies 159–330 (ADVGLVGFPN…LKHAMADRVL (172 aa)). Residues 165-172 (GFPNAGKS), 190-194 (FTTLE), 212-215 (DIPG), 282-285 (TKMD), and 311-313 (SSA) each bind GTP. Positions 172 and 192 each coordinate Mg(2+).

Belongs to the TRAFAC class OBG-HflX-like GTPase superfamily. OBG GTPase family. As to quaternary structure, monomer. Mg(2+) serves as cofactor.

Its subcellular location is the cytoplasm. Functionally, an essential GTPase which binds GTP, GDP and possibly (p)ppGpp with moderate affinity, with high nucleotide exchange rates and a fairly low GTP hydrolysis rate. Plays a role in control of the cell cycle, stress response, ribosome biogenesis and in those bacteria that undergo differentiation, in morphogenesis control. The polypeptide is GTPase Obg (Solibacter usitatus (strain Ellin6076)).